The sequence spans 248 residues: Proteasome subunit alpha (248 aa).

It belongs to the peptidase T1A family. The 20S proteasome core is composed of 14 alpha and 14 beta subunits that assemble into four stacked heptameric rings, resulting in a barrel-shaped structure. The two inner rings, each composed of seven catalytic beta subunits, are sandwiched by two outer rings, each composed of seven alpha subunits. The catalytic chamber with the active sites is on the inside of the barrel. Has a gated structure, the ends of the cylinder being occluded by the N-termini of the alpha-subunits. Is capped by the proteasome-associated ATPase, ARC.

The protein resides in the cytoplasm. The protein operates within protein degradation; proteasomal Pup-dependent pathway. With respect to regulation, the formation of the proteasomal ATPase ARC-20S proteasome complex, likely via the docking of the C-termini of ARC into the intersubunit pockets in the alpha-rings, may trigger opening of the gate for substrate entry. Interconversion between the open-gate and close-gate conformations leads to a dynamic regulation of the 20S proteasome proteolysis activity. Functionally, component of the proteasome core, a large protease complex with broad specificity involved in protein degradation. This chain is Proteasome subunit alpha, found in Mycobacterium tuberculosis (strain ATCC 25177 / H37Ra).